We begin with the raw amino-acid sequence, 350 residues long: Homeobox-leucine zipper protein HOX5 (350 aa).

Residues 83 to 142 (APEKKRRLTAEQVQMLERSFEEENKLEPERKTELARRLGMAPRQVAVWFQNRRARWKTKQ) constitute a DNA-binding region (homeobox). The segment at 141–185 (KQLEHDFDRLKAAYDALAADHHALLSDNDRLRAQVISLTEKLQDK) is leucine-zipper. Residues 180–254 (EKLQDKETSP…TNDDGDGGGA (75 aa)) form a disordered region. The span at 188 to 198 (SPSSATITTAA) shows a compositional bias: low complexity.

The protein belongs to the HD-ZIP homeobox family. Class I subfamily. As to quaternary structure, homodimer. May form a heterodimer with HOX4. In terms of tissue distribution, expressed in seedlings, roots, leaves, nodes, internodes, flowers and embryo.

Its subcellular location is the nucleus. In terms of biological role, probable transcription activator that binds to the DNA sequence 5'-CAAT[AT]ATTG-3'. The chain is Homeobox-leucine zipper protein HOX5 (HOX5) from Oryza sativa subsp. indica (Rice).